Here is a 434-residue protein sequence, read N- to C-terminus: uncharacterized protein (434 aa).

Residue lysine 216 is modified to N6-(pyridoxal phosphate)lysine.

This is an uncharacterized protein from Schizosaccharomyces pombe (strain 972 / ATCC 24843) (Fission yeast).